A 242-amino-acid polypeptide reads, in one-letter code: 3-oxoacyl-[acyl-carrier-protein] reductase FabG (242 aa).

NADP(+)-binding positions include 10–13 (GSTR), T35, 57–58 (NV), and N84. Residue S136 participates in substrate binding. Y149 acts as the Proton acceptor in catalysis. NADP(+)-binding positions include 149–153 (YCAAK) and I182.

Belongs to the short-chain dehydrogenases/reductases (SDR) family. As to quaternary structure, homotetramer.

It carries out the reaction a (3R)-hydroxyacyl-[ACP] + NADP(+) = a 3-oxoacyl-[ACP] + NADPH + H(+). Its pathway is lipid metabolism; fatty acid biosynthesis. Catalyzes the NADPH-dependent reduction of beta-ketoacyl-ACP substrates to beta-hydroxyacyl-ACP products, the first reductive step in the elongation cycle of fatty acid biosynthesis. The chain is 3-oxoacyl-[acyl-carrier-protein] reductase FabG (fabG) from Haemophilus influenzae (strain ATCC 51907 / DSM 11121 / KW20 / Rd).